A 209-amino-acid chain; its full sequence is Uracil phosphoribosyltransferase (209 aa).

Residues Arg-79, Arg-104, and 131–139 each bind 5-phospho-alpha-D-ribose 1-diphosphate; that span reads DPMLATGGS. Residues Ile-194 and 199-201 contribute to the uracil site; that span reads GDA. A 5-phospho-alpha-D-ribose 1-diphosphate-binding site is contributed by Asp-200.

The protein belongs to the UPRTase family. Requires Mg(2+) as cofactor.

The catalysed reaction is UMP + diphosphate = 5-phospho-alpha-D-ribose 1-diphosphate + uracil. It functions in the pathway pyrimidine metabolism; UMP biosynthesis via salvage pathway; UMP from uracil: step 1/1. Its activity is regulated as follows. Allosterically activated by GTP. Its function is as follows. Catalyzes the conversion of uracil and 5-phospho-alpha-D-ribose 1-diphosphate (PRPP) to UMP and diphosphate. This chain is Uracil phosphoribosyltransferase, found in Macrococcus caseolyticus (strain JCSC5402) (Macrococcoides caseolyticum).